Reading from the N-terminus, the 493-residue chain is Glycerol kinase (493 aa).

Residue T13 participates in ADP binding. Residues T13, T14, and S15 each contribute to the ATP site. T13 serves as a coordination point for sn-glycerol 3-phosphate. R17 contributes to the ADP binding site. R83, E84, Y135, and D244 together coordinate sn-glycerol 3-phosphate. Glycerol is bound by residues R83, E84, Y135, D244, and Q245. Residues T266 and G309 each coordinate ADP. T266, G309, Q313, and G410 together coordinate ATP. ADP contacts are provided by G410 and N414.

This sequence belongs to the FGGY kinase family.

The catalysed reaction is glycerol + ATP = sn-glycerol 3-phosphate + ADP + H(+). Its pathway is polyol metabolism; glycerol degradation via glycerol kinase pathway; sn-glycerol 3-phosphate from glycerol: step 1/1. With respect to regulation, inhibited by fructose 1,6-bisphosphate (FBP). In terms of biological role, key enzyme in the regulation of glycerol uptake and metabolism. Catalyzes the phosphorylation of glycerol to yield sn-glycerol 3-phosphate. The sequence is that of Glycerol kinase from Shewanella pealeana (strain ATCC 700345 / ANG-SQ1).